The primary structure comprises 251 residues: 5'-nucleotidase SurE (251 aa).

Residues Asp-8, Asp-9, Ser-40, and Asn-95 each contribute to the a divalent metal cation site.

Belongs to the SurE nucleotidase family. A divalent metal cation is required as a cofactor.

Its subcellular location is the cytoplasm. It carries out the reaction a ribonucleoside 5'-phosphate + H2O = a ribonucleoside + phosphate. Nucleotidase that shows phosphatase activity on nucleoside 5'-monophosphates. This Desulfitobacterium hafniense (strain DSM 10664 / DCB-2) protein is 5'-nucleotidase SurE.